The sequence spans 199 residues: MASEFWLIVGLGNPGAKYRNTRHNMGFMTVNELAKRWSIHFANHKGLADLGKGTMSLNGQTAKVFLCKPLTYMNDSGQAVQSIREYYHINLDHIVVIHDDMDLEFGRIKLKSGGSAGGHNGIKSIDRCLHSPDYARVRMGVGHASRSGDAHDNTINWVLGEFNAAQRKQLPEFLADGADAAETIVFEGLTKAQDKFNAR.

Residue Tyr-18 coordinates tRNA. Residue His-23 is the Proton acceptor of the active site. Positions 72, 74, and 120 each coordinate tRNA.

The protein belongs to the PTH family. Monomer.

The protein localises to the cytoplasm. It catalyses the reaction an N-acyl-L-alpha-aminoacyl-tRNA + H2O = an N-acyl-L-amino acid + a tRNA + H(+). Functionally, hydrolyzes ribosome-free peptidyl-tRNAs (with 1 or more amino acids incorporated), which drop off the ribosome during protein synthesis, or as a result of ribosome stalling. In terms of biological role, catalyzes the release of premature peptidyl moieties from peptidyl-tRNA molecules trapped in stalled 50S ribosomal subunits, and thus maintains levels of free tRNAs and 50S ribosomes. In Bifidobacterium animalis subsp. lactis (strain AD011), this protein is Peptidyl-tRNA hydrolase.